We begin with the raw amino-acid sequence, 388 residues long: Succinate--CoA ligase [ADP-forming] subunit beta (388 aa).

Residues 9 to 244 (KQLFAEYGLP…PSQDDPREAH (236 aa)) enclose the ATP-grasp domain. ATP contacts are provided by residues lysine 46, 53-55 (GRG), glutamate 99, threonine 102, and glutamate 107. Mg(2+) is bound by residues asparagine 199 and aspartate 213. Substrate-binding positions include asparagine 264 and 321-323 (GIV).

Belongs to the succinate/malate CoA ligase beta subunit family. In terms of assembly, heterotetramer of two alpha and two beta subunits. Mg(2+) is required as a cofactor.

The catalysed reaction is succinate + ATP + CoA = succinyl-CoA + ADP + phosphate. It catalyses the reaction GTP + succinate + CoA = succinyl-CoA + GDP + phosphate. Its pathway is carbohydrate metabolism; tricarboxylic acid cycle; succinate from succinyl-CoA (ligase route): step 1/1. Succinyl-CoA synthetase functions in the citric acid cycle (TCA), coupling the hydrolysis of succinyl-CoA to the synthesis of either ATP or GTP and thus represents the only step of substrate-level phosphorylation in the TCA. The beta subunit provides nucleotide specificity of the enzyme and binds the substrate succinate, while the binding sites for coenzyme A and phosphate are found in the alpha subunit. This is Succinate--CoA ligase [ADP-forming] subunit beta from Pseudomonas fluorescens (strain SBW25).